Reading from the N-terminus, the 207-residue chain is Glycerol-3-phosphate acyltransferase (207 aa).

6 helical membrane passes run 7 to 27 (YALA…LVIV), 58 to 78 (LATF…FTLL), 83 to 103 (VGFV…WLGF), 116 to 136 (LAFV…LGLF), 141 to 161 (ISSL…WLMG), and 166 to 186 (LILA…RENI).

The protein belongs to the PlsY family. As to quaternary structure, probably interacts with PlsX.

The protein resides in the cell inner membrane. It catalyses the reaction an acyl phosphate + sn-glycerol 3-phosphate = a 1-acyl-sn-glycero-3-phosphate + phosphate. It participates in lipid metabolism; phospholipid metabolism. Catalyzes the transfer of an acyl group from acyl-phosphate (acyl-PO(4)) to glycerol-3-phosphate (G3P) to form lysophosphatidic acid (LPA). This enzyme utilizes acyl-phosphate as fatty acyl donor, but not acyl-CoA or acyl-ACP. In Hyphomonas neptunium (strain ATCC 15444), this protein is Glycerol-3-phosphate acyltransferase.